A 299-amino-acid polypeptide reads, in one-letter code: N-acetylmuramic acid 6-phosphate etherase (299 aa).

The SIS domain occupies 54–217; that stretch reads TIAQYKKGGR…STITMVGVGK (164 aa). The active-site Proton donor is the Glu-82. Glu-113 is an active-site residue.

The protein belongs to the GCKR-like family. MurNAc-6-P etherase subfamily. In terms of assembly, homodimer.

The catalysed reaction is N-acetyl-D-muramate 6-phosphate + H2O = N-acetyl-D-glucosamine 6-phosphate + (R)-lactate. Its pathway is amino-sugar metabolism; N-acetylmuramate degradation. Its function is as follows. Specifically catalyzes the cleavage of the D-lactyl ether substituent of MurNAc 6-phosphate, producing GlcNAc 6-phosphate and D-lactate. The protein is N-acetylmuramic acid 6-phosphate etherase of Staphylococcus aureus (strain USA300).